The primary structure comprises 287 residues: ATP synthase gamma chain (287 aa).

It belongs to the ATPase gamma chain family. In terms of assembly, F-type ATPases have 2 components, CF(1) - the catalytic core - and CF(0) - the membrane proton channel. CF(1) has five subunits: alpha(3), beta(3), gamma(1), delta(1), epsilon(1). CF(0) has three main subunits: a, b and c.

It localises to the cell membrane. In terms of biological role, produces ATP from ADP in the presence of a proton gradient across the membrane. The gamma chain is believed to be important in regulating ATPase activity and the flow of protons through the CF(0) complex. This is ATP synthase gamma chain from Bacillus caldotenax.